Here is a 337-residue protein sequence, read N- to C-terminus: Nucleoid-associated protein HS_0228 (337 aa).

The protein belongs to the YejK family.

The protein resides in the cytoplasm. It localises to the nucleoid. This chain is Nucleoid-associated protein HS_0228, found in Histophilus somni (strain 129Pt) (Haemophilus somnus).